We begin with the raw amino-acid sequence, 122 residues long: Large ribosomal subunit protein uL14 (122 aa).

The protein belongs to the universal ribosomal protein uL14 family. Part of the 50S ribosomal subunit. Forms a cluster with proteins L3 and L19. In the 70S ribosome, L14 and L19 interact and together make contacts with the 16S rRNA in bridges B5 and B8.

Binds to 23S rRNA. Forms part of two intersubunit bridges in the 70S ribosome. The chain is Large ribosomal subunit protein uL14 from Fusobacterium nucleatum subsp. nucleatum (strain ATCC 25586 / DSM 15643 / BCRC 10681 / CIP 101130 / JCM 8532 / KCTC 2640 / LMG 13131 / VPI 4355).